A 249-amino-acid polypeptide reads, in one-letter code: ATP synthase subunit a (249 aa).

6 consecutive transmembrane segments (helical) span residues 30–50, 84–104, 113–133, 143–163, 196–216, and 221–241; these read SAYM…GSAG, FFPL…VGII, HIIV…IYGF, IFVP…IEVF, LLAG…GMVV, and LELL…CIYL.

The protein belongs to the ATPase A chain family. As to quaternary structure, F-type ATPases have 2 components, CF(1) - the catalytic core - and CF(0) - the membrane proton channel. CF(1) has five subunits: alpha(3), beta(3), gamma(1), delta(1), epsilon(1). CF(0) has four main subunits: a, b, b' and c.

Its subcellular location is the cell inner membrane. In terms of biological role, key component of the proton channel; it plays a direct role in the translocation of protons across the membrane. This chain is ATP synthase subunit a, found in Rhodopseudomonas palustris (strain BisA53).